We begin with the raw amino-acid sequence, 301 residues long: ADP-ribosyl cyclase/cyclic ADP-ribose hydrolase 1 (301 aa).

The Cytoplasmic portion of the chain corresponds to 1-21; sequence MANCEFSPVSGDKPCCRLSRR. Residues 22–43 traverse the membrane as a helical; Signal-anchor for type II membrane protein segment; sequence AQVCLGVCLLVLLILVVVVAVV. Over 44–301 the chain is Extracellular; sequence LPRWRQQWSG…PEDSSCLSGI (258 aa). 3 disulfide bridges follow: Cys-68–Cys-83, Cys-100–Cys-181, and Cys-161–Cys-174. A glycan (N-linked (GlcNAc...) asparagine) is linked at Asn-101. Cys-120 is an active-site residue. The N-linked (GlcNAc...) asparagine glycan is linked to Asn-121. The active site involves Cys-202. Residues Asn-210 and Asn-220 are each glycosylated (N-linked (GlcNAc...) asparagine). Disulfide bonds link Cys-255-Cys-276 and Cys-288-Cys-297.

The protein belongs to the ADP-ribosyl cyclase family. Homodimer.

Its subcellular location is the cell surface. The protein localises to the membrane. The catalysed reaction is NAD(+) = cyclic ADP-beta-D-ribose + nicotinamide + H(+). The enzyme catalyses 2'-phospho-cyclic ADP-ribose + nicotinate = nicotinate-adenine dinucleotide phosphate. It catalyses the reaction NAD(+) + H2O = ADP-D-ribose + nicotinamide + H(+). It carries out the reaction nicotinate + NADP(+) = nicotinate-adenine dinucleotide phosphate + nicotinamide. Its activity is regulated as follows. ATP inhibits the cADPR hydrolyzing activity. Its function is as follows. Synthesizes cyclic ADP-ribose (cADPR), a second messenger for glucose-induced insulin secretion. Synthesizes the Ca(2+) mobilizer nicotinate-adenine dinucleotide phosphate, NAADP(+), from 2'-phospho-cADPR and nicotinic acid, as well as from NADP(+) and nicotinic acid. Also has cADPR hydrolase activity. In Macaca fascicularis (Crab-eating macaque), this protein is ADP-ribosyl cyclase/cyclic ADP-ribose hydrolase 1 (CD38).